Here is a 272-residue protein sequence, read N- to C-terminus: Dermonecrotic toxin StSicTox-betaIC1 (272 aa).

The active site involves His-5. The Mg(2+) site is built by Glu-25 and Asp-27. His-41 functions as the Nucleophile in the catalytic mechanism. 2 disulfide bridges follow: Cys-45–Cys-51 and Cys-47–Cys-191. A Mg(2+)-binding site is contributed by Asp-85.

It belongs to the arthropod phospholipase D family. Class II subfamily. Class IIb sub-subfamily. Requires Mg(2+) as cofactor. Expressed by the venom gland.

It localises to the secreted. It catalyses the reaction an N-(acyl)-sphingosylphosphocholine = an N-(acyl)-sphingosyl-1,3-cyclic phosphate + choline. The catalysed reaction is N-hexanoyl-sphing-4-enine-1-phosphocholine = N-(hexanoyl)-sphing-4-enine-1,3-cyclic phosphate + choline. It carries out the reaction an N-(acyl)-sphingosylphosphoethanolamine = an N-(acyl)-sphingosyl-1,3-cyclic phosphate + ethanolamine. The enzyme catalyses N-dodecanoyl-heptadecasphing-4-enine-1-phosphoethanolamine = N-dodecanoyl-heptadecasphing-4-enine-1,3-cyclic phosphate + ethanolamine. It catalyses the reaction a 1-acyl-sn-glycero-3-phosphoethanolamine = a 1-acyl-sn-glycero-2,3-cyclic phosphate + ethanolamine. The catalysed reaction is 1-tetradecanoyl-sn-glycero-3-phosphoethanolamine = 1-tetradecanoyl-sn-glycero-2,3-cyclic phosphate + ethanolamine. In terms of biological role, dermonecrotic toxins cleave the phosphodiester linkage between the phosphate and headgroup of certain phospholipids (sphingolipid and lysolipid substrates), forming an alcohol (often choline) and a cyclic phosphate. This toxin acts on lysophosphatidylethanolamine (LPE) and ceramide phosphoethanolamine (CPE) with high activity. This toxin acts on sphingomyelin (SM) with very low activity and is not active on lysophosphatidylserine (LPS), lysophosphatidylcholine (LPC) and lysophosphatidylglycerol (LPG). It acts by transphosphatidylation, releasing exclusively cyclic phosphate as second products. It is not surprising that spider toxins have affinity for ethanolamine-containing sphingolipids since they are common in insect prey. Induces dermonecrosis, hemolysis, increased vascular permeability, edema, inflammatory response, and platelet aggregation. In Sicarius terrosus (Cave spider), this protein is Dermonecrotic toxin StSicTox-betaIC1.